The primary structure comprises 151 residues: Ribonuclease H (151 aa).

The RNase H type-1 domain maps to 5–146; the sequence is ALPHVTIFTD…ADQLAREGVA (142 aa). Positions 14, 52, 74, and 138 each coordinate Mg(2+).

This sequence belongs to the RNase H family. Monomer. Mg(2+) serves as cofactor.

The protein localises to the cytoplasm. The enzyme catalyses Endonucleolytic cleavage to 5'-phosphomonoester.. Endonuclease that specifically degrades the RNA of RNA-DNA hybrids. This is Ribonuclease H from Nitrobacter hamburgensis (strain DSM 10229 / NCIMB 13809 / X14).